The following is a 155-amino-acid chain: 6,7-dimethyl-8-ribityllumazine synthase (155 aa).

5-amino-6-(D-ribitylamino)uracil is bound by residues phenylalanine 24, 58–60, and 82–84; these read AFE and AII. 87–88 is a (2S)-2-hydroxy-3-oxobutyl phosphate binding site; the sequence is AT. Catalysis depends on histidine 90, which acts as the Proton donor. Phenylalanine 115 is a 5-amino-6-(D-ribitylamino)uracil binding site. Arginine 129 is a binding site for (2S)-2-hydroxy-3-oxobutyl phosphate.

Belongs to the DMRL synthase family.

The catalysed reaction is (2S)-2-hydroxy-3-oxobutyl phosphate + 5-amino-6-(D-ribitylamino)uracil = 6,7-dimethyl-8-(1-D-ribityl)lumazine + phosphate + 2 H2O + H(+). It functions in the pathway cofactor biosynthesis; riboflavin biosynthesis; riboflavin from 2-hydroxy-3-oxobutyl phosphate and 5-amino-6-(D-ribitylamino)uracil: step 1/2. Its function is as follows. Catalyzes the formation of 6,7-dimethyl-8-ribityllumazine by condensation of 5-amino-6-(D-ribitylamino)uracil with 3,4-dihydroxy-2-butanone 4-phosphate. This is the penultimate step in the biosynthesis of riboflavin. This chain is 6,7-dimethyl-8-ribityllumazine synthase, found in Prosthecochloris aestuarii (strain DSM 271 / SK 413).